We begin with the raw amino-acid sequence, 1909 residues long: Nck-associated protein 5 (1909 aa).

A coiled-coil region spans residues 71-253 (EKLIHELEEE…DLEQQNRTLS (183 aa)). Disordered stretches follow at residues 351–370 (SSYT…SQNW), 736–819 (EEDT…LMEP), 855–997 (PLFE…KKPS), 1026–1469 (SSSF…APLS), 1486–1509 (KGQV…FASW), 1541–1592 (GFGN…RTPQ), 1725–1750 (FPLP…DAEP), and 1763–1885 (SMRA…DYGD). A compositionally biased stretch (basic and acidic residues) spans 736 to 748 (EEDTEKNIPKDNV). Polar residues-rich tracts occupy residues 753–789 (RVST…SRSS), 950–965 (APSS…SETA), 981–990 (VISSNPATTE), and 1066–1084 (PRIS…SKSV). Composition is skewed to low complexity over residues 1110 to 1131 (SPSS…HNSP) and 1178 to 1187 (ASKSSVAVNK). A compositionally biased stretch (basic and acidic residues) spans 1241 to 1250 (DGRDGVDNRS). Polar residues predominate over residues 1300–1325 (QIITNTAERGNSLTRQNSSTESSPNK). Over residues 1339–1366 (GRPSGHPSSGKGSLGSSGSFSSQHGSPS) the composition is skewed to low complexity. Over residues 1428–1446 (PGRTQHPSTFETSSTSKLE) the composition is skewed to polar residues. The segment covering 1454 to 1466 (ASATATDAVSSEA) has biased composition (low complexity). 2 stretches are compositionally biased toward basic and acidic residues: residues 1547–1560 (LKSE…KPEL) and 1567–1576 (ELIKDTKSAD). A compositionally biased stretch (polar residues) spans 1869-1878 (YSASGGSNSD).

As to quaternary structure, interacts with the SH3-containing region of the adapter protein NCK. Expressed in fetal and adult brain, leukocytes and fetal fibroblasts.

This chain is Nck-associated protein 5 (NCKAP5), found in Homo sapiens (Human).